The sequence spans 175 residues: Cytochrome c-type biogenesis protein CcmE (175 aa).

Over 1-8 (MNAVRRKK) the chain is Cytoplasmic. A helical; Signal-anchor for type II membrane protein membrane pass occupies residues 9-29 (LIWVAATLAGAIIAVLLVIYA). Residues 30–175 (IGQQTDYYFD…GNHTTSTLQE (146 aa)) lie on the Periplasmic side of the membrane. The heme site is built by histidine 124 and tyrosine 128. Positions 142-175 (AAKGVTPTSEQFSPAIPVKQTAGEGNHTTSTLQE) are disordered.

The protein belongs to the CcmE/CycJ family.

The protein resides in the cell inner membrane. In terms of biological role, heme chaperone required for the biogenesis of c-type cytochromes. Transiently binds heme delivered by CcmC and transfers the heme to apo-cytochromes in a process facilitated by CcmF and CcmH. The protein is Cytochrome c-type biogenesis protein CcmE of Psychrobacter sp. (strain PRwf-1).